The following is a 427-amino-acid chain: MFKLSVIEELLAHVDKNKEELLALVQTLVAYPTPSPPARNTADAQQYIRTYCEKLGCNVDMWDVYPNDPNVVAVLKGTYSESYRSLILNGHIDVAAVDESEEWKTPPFEATVNQGVIRGRGVADMKGGLAACLFAMKTLHAFNIQLPGDLIFQSVVGEEVGEAGTKSCCERGYTADLAIVSDTSHCEIQGQGGVITGWITVKSPVTFHDGTRRNLIHAGGGEFGASAIEKMMKLIQGLQELERHWAVTKSSPGFPPGMNTINPAFIEGGRHPAFIADECKLWITIHYYPHESYEEIVREVEEHLLHVAKADPWMREHPPSFSWGGTSMIEDKGEIFPAFQIDEQSDAVQLLKKIHYHLTGEEVKTSMSQTVTDGGWLAEAGIPTLLFGPGKLEDAHSVNEELEIAELVQYTKTLLTFIYEWCHLRKA.

Histidine 91 contacts Zn(2+). Aspartate 93 is an active-site residue. Residue aspartate 124 participates in Zn(2+) binding. The Proton acceptor role is filled by glutamate 158. Residues glutamate 159, aspartate 182, and histidine 396 each contribute to the Zn(2+) site.

Belongs to the peptidase M20A family. It depends on Zn(2+) as a cofactor. Co(2+) is required as a cofactor.

It catalyses the reaction N-formyl-4-amino-5-aminomethyl-2-methylpyrimidine + H2O = 4-amino-5-aminomethyl-2-methylpyrimidine + formate. The protein operates within cofactor biosynthesis; thiamine diphosphate biosynthesis. In terms of biological role, catalyzes the deformylation of the formylaminopyrimidine N-formyl-4-amino-5-aminomethyl-2-methylpyrimidine (FAMP) to give the corresponding aminopyrimidine. The protein is N-formyl-4-amino-5-aminomethyl-2-methylpyrimidine deformylase of Halalkalibacterium halodurans (strain ATCC BAA-125 / DSM 18197 / FERM 7344 / JCM 9153 / C-125) (Bacillus halodurans).